The chain runs to 110 residues: Iron-sulfur cluster assembly protein CyaY (110 aa).

The protein belongs to the frataxin family.

Involved in iron-sulfur (Fe-S) cluster assembly. May act as a regulator of Fe-S biogenesis. In Variovorax paradoxus (strain S110), this protein is Iron-sulfur cluster assembly protein CyaY.